Consider the following 118-residue polypeptide: Large ribosomal subunit protein bL20c (118 aa).

This sequence belongs to the bacterial ribosomal protein bL20 family.

Its subcellular location is the plastid. It localises to the chloroplast. Its function is as follows. Binds directly to 23S ribosomal RNA and is necessary for the in vitro assembly process of the 50S ribosomal subunit. It is not involved in the protein synthesizing functions of that subunit. This chain is Large ribosomal subunit protein bL20c, found in Adiantum capillus-veneris (Maidenhair fern).